A 265-amino-acid chain; its full sequence is Oxygen-evolving enhancer protein 2-2, chloroplastic (265 aa).

The N-terminal 79 residues, 1-79 (MASTQCFLHH…VGSKVSPADA (79 aa)), are a transit peptide targeting the chloroplast.

Belongs to the PsbP family.

The protein resides in the plastid. It is found in the chloroplast thylakoid membrane. Its function is as follows. May be involved in the regulation of photosystem II. This chain is Oxygen-evolving enhancer protein 2-2, chloroplastic (PSBP2), found in Nicotiana tabacum (Common tobacco).